Reading from the N-terminus, the 349-residue chain is Protein POOR HOMOLOGOUS SYNAPSIS 1 (349 aa).

It localises to the cytoplasm. In terms of biological role, required for accurate chromosome segregation in meiosis. Required for pairing to occur between homologous chromosomes. Acts in early recombination steps and ensures pairing fidelity and proper repair of meiotic DNA double-strand-breaks. Regulates recombination and pairing of homologous chromosomes during meiotic prophase by controlling transport of RAD50 from cytoplasm to the nucleus. May affect pairing of the gene-rich fraction of the genome rather than preventing pairing between repetitive DNA elements. This Arabidopsis thaliana (Mouse-ear cress) protein is Protein POOR HOMOLOGOUS SYNAPSIS 1.